The chain runs to 238 residues: MVERDNELKGTTFTISVLHISDGKPERIRQLLAAKVAQAPQFFNCAPLVINVERLADIPDFDQLKGLVESEDFVLVGITGARDEAMKTAAKAAGLAVMASGKSRKVEPLPLPEPTPSPVAEVKAAPAPLVPSKVHVGPVRSGQQLYAAGTSLVILGSVSQGAEVIADDSIHIYGALRGRAIAGAKGNTQARIYCQQLQAELLSIAGTFQLSDALPAGLIQQPVHVRLDNEQLRIDHIK.

Belongs to the MinC family. In terms of assembly, interacts with MinD and FtsZ.

Functionally, cell division inhibitor that blocks the formation of polar Z ring septums. Rapidly oscillates between the poles of the cell to destabilize FtsZ filaments that have formed before they mature into polar Z rings. Prevents FtsZ polymerization. The polypeptide is Probable septum site-determining protein MinC (Aeromonas salmonicida (strain A449)).